Consider the following 278-residue polypeptide: Urease accessory protein UreD (278 aa).

The protein belongs to the UreD family. In terms of assembly, ureD, UreF and UreG form a complex that acts as a GTP-hydrolysis-dependent molecular chaperone, activating the urease apoprotein by helping to assemble the nickel containing metallocenter of UreC. The UreE protein probably delivers the nickel.

The protein resides in the cytoplasm. Functionally, required for maturation of urease via the functional incorporation of the urease nickel metallocenter. This is Urease accessory protein UreD from Staphylococcus aureus (strain JH1).